Consider the following 310-residue polypeptide: Aspartate carbamoyltransferase catalytic subunit (310 aa).

Carbamoyl phosphate is bound by residues R57 and T58. Position 86 (K86) interacts with L-aspartate. Carbamoyl phosphate contacts are provided by R107, H135, and Q138. The L-aspartate site is built by R168 and R229. Residues L268 and P269 each coordinate carbamoyl phosphate.

It belongs to the aspartate/ornithine carbamoyltransferase superfamily. ATCase family. Heterooligomer of catalytic and regulatory chains.

The enzyme catalyses carbamoyl phosphate + L-aspartate = N-carbamoyl-L-aspartate + phosphate + H(+). It functions in the pathway pyrimidine metabolism; UMP biosynthesis via de novo pathway; (S)-dihydroorotate from bicarbonate: step 2/3. Functionally, catalyzes the condensation of carbamoyl phosphate and aspartate to form carbamoyl aspartate and inorganic phosphate, the committed step in the de novo pyrimidine nucleotide biosynthesis pathway. The chain is Aspartate carbamoyltransferase catalytic subunit from Thermococcus onnurineus (strain NA1).